A 317-amino-acid chain; its full sequence is Transaldolase (317 aa).

Lysine 132 acts as the Schiff-base intermediate with substrate in catalysis.

This sequence belongs to the transaldolase family. Type 1 subfamily. Homodimer.

The protein resides in the cytoplasm. The enzyme catalyses D-sedoheptulose 7-phosphate + D-glyceraldehyde 3-phosphate = D-erythrose 4-phosphate + beta-D-fructose 6-phosphate. Its pathway is carbohydrate degradation; pentose phosphate pathway; D-glyceraldehyde 3-phosphate and beta-D-fructose 6-phosphate from D-ribose 5-phosphate and D-xylulose 5-phosphate (non-oxidative stage): step 2/3. Functionally, transaldolase is important for the balance of metabolites in the pentose-phosphate pathway. In Shewanella amazonensis (strain ATCC BAA-1098 / SB2B), this protein is Transaldolase.